We begin with the raw amino-acid sequence, 264 residues long: Acyl-[acyl-carrier-protein]--UDP-N-acetylglucosamine O-acyltransferase (264 aa).

This sequence belongs to the transferase hexapeptide repeat family. LpxA subfamily. Homotrimer.

It localises to the cytoplasm. The catalysed reaction is a (3R)-hydroxyacyl-[ACP] + UDP-N-acetyl-alpha-D-glucosamine = a UDP-3-O-[(3R)-3-hydroxyacyl]-N-acetyl-alpha-D-glucosamine + holo-[ACP]. Its pathway is glycolipid biosynthesis; lipid IV(A) biosynthesis; lipid IV(A) from (3R)-3-hydroxytetradecanoyl-[acyl-carrier-protein] and UDP-N-acetyl-alpha-D-glucosamine: step 1/6. Involved in the biosynthesis of lipid A, a phosphorylated glycolipid that anchors the lipopolysaccharide to the outer membrane of the cell. The chain is Acyl-[acyl-carrier-protein]--UDP-N-acetylglucosamine O-acyltransferase from Albidiferax ferrireducens (strain ATCC BAA-621 / DSM 15236 / T118) (Rhodoferax ferrireducens).